A 530-amino-acid polypeptide reads, in one-letter code: Autoinducer-2 kinase (530 aa).

This sequence belongs to the FGGY kinase family.

Its subcellular location is the cytoplasm. It catalyses the reaction (S)-4,5-dihydroxypentane-2,3-dione + ATP = (2S)-2-hydroxy-3,4-dioxopentyl phosphate + ADP + H(+). In terms of biological role, catalyzes the phosphorylation of autoinducer-2 (AI-2) to phospho-AI-2, which subsequently inactivates the transcriptional regulator LsrR and leads to the transcription of the lsr operon. Phosphorylates the ring-open form of (S)-4,5-dihydroxypentane-2,3-dione (DPD), which is the precursor to all AI-2 signaling molecules, at the C5 position. This is Autoinducer-2 kinase from Salmonella choleraesuis (strain SC-B67).